A 335-amino-acid chain; its full sequence is Carboxylesterase 1 (335 aa).

Residues 90–92 carry the Involved in the stabilization of the negatively charged intermediate by the formation of the oxyanion hole motif; sequence HGG. Paraoxon is bound by residues 92 to 93, Ser-169, and Ala-170; that span reads GG. Residue Ser-169 is part of the active site. Residues Asp-276 and His-306 contribute to the active site.

Belongs to the 'GDXG' lipolytic enzyme family.

The catalysed reaction is a carboxylic ester + H2O = an alcohol + a carboxylate + H(+). Its activity is regulated as follows. Is inhibited by the organophosphates paraoxon and dimethylchlorophosphate (DMCP). Its function is as follows. Carboxylesterase acting on esters with varying acyl chain length. The protein is Carboxylesterase 1 (CXE1) of Actinidia eriantha (Velvet vine).